Here is a 302-residue protein sequence, read N- to C-terminus: Aurora/IPL1-related protein kinase 2 (302 aa).

The segment covering 1–17 (MENKPQILQTKSKNTPN) has biased composition (polar residues). Residues 1 to 23 (MENKPQILQTKSKNTPNKGGKLS) are disordered. In terms of domain architecture, Protein kinase spans 27 to 277 (FEIGRPLGKG…LQEVKDHYWV (251 aa)). ATP contacts are provided by residues 33–41 (LGKGKFGSV) and Lys56. Catalysis depends on Asp150, which acts as the Proton acceptor.

Belongs to the protein kinase superfamily. Ser/Thr protein kinase family. As to quaternary structure, interacts with zen-4 and icp-1. Part of a complex containing at least air-2; icp-1; csc-1 and bir-1. Interacts with tlk-1 and bmk-1.

The protein resides in the cytoplasm. It is found in the cytoskeleton. The protein localises to the chromosome. Its subcellular location is the midbody. The enzyme catalyses L-seryl-[protein] + ATP = O-phospho-L-seryl-[protein] + ADP + H(+). The catalysed reaction is L-threonyl-[protein] + ATP = O-phospho-L-threonyl-[protein] + ADP + H(+). Its function is as follows. Serine/threonine-protein kinase which mediates both meiotic and mitotic chromosome segregation. Required for histone H3 'Ser-10' phosphorylation. Phosphorylates tlk-1 and zen-4. This Caenorhabditis briggsae protein is Aurora/IPL1-related protein kinase 2 (air-2).